The primary structure comprises 263 residues: MSEEKRKQHFVLVHGACHGAWCWYKVKPLLEALGHRVTALDLAASGIDTTRSITDISTCEQYSEPLMQLMTSLPNDEKVVLVGHSFGGLSLALAMDKFPDKISVSVFVTAFMPDTKHSPSFVEEKFASSMTPEGWMGSELETYGSDNSGLSVFFSTDFMKHRLYQLSPVEDLELGLLLKRPSSLFINELSKMENFSEKGYGSVPRAYIVCKEDNIISEDHQRWMIHNYPANLVIEMEETDHMPMFCKPQLLSDHLLAIADNFC.

Serine 85 functions as the Acyl-ester intermediate in the catalytic mechanism. Active-site charge relay system residues include aspartate 213 and histidine 241.

This sequence belongs to the AB hydrolase superfamily. Methylesterase family.

It carries out the reaction methyl (indol-3-yl)acetate + H2O = (indol-3-yl)acetate + methanol + H(+). The enzyme catalyses methyl (-)-jasmonate + H2O = jasmonate + methanol + H(+). It catalyses the reaction methyl salicylate + H2O = salicylate + methanol + H(+). The protein operates within plant hormone biosynthesis. It functions in the pathway lipid metabolism; oxylipin biosynthesis. Esterase activity is down-regulated by salicylic acid (SA). Down-regulated by agrochemicals Paraoxon, 3,4-DCl and Profenofos. In terms of biological role, methylesterase shown to have carboxylesterase activity, methyl indole-3-acetic acid (MeIAA) esterase activity, methyl salicylate (MeSA) esterase activity and methyl jasmonate (MeJA) esterase activity in vitro. The polypeptide is Methylesterase 2 (Arabidopsis thaliana (Mouse-ear cress)).